The sequence spans 204 residues: Leucyl/phenylalanyl-tRNA--protein transferase (204 aa).

It belongs to the L/F-transferase family.

It localises to the cytoplasm. The enzyme catalyses N-terminal L-lysyl-[protein] + L-leucyl-tRNA(Leu) = N-terminal L-leucyl-L-lysyl-[protein] + tRNA(Leu) + H(+). It carries out the reaction N-terminal L-arginyl-[protein] + L-leucyl-tRNA(Leu) = N-terminal L-leucyl-L-arginyl-[protein] + tRNA(Leu) + H(+). It catalyses the reaction L-phenylalanyl-tRNA(Phe) + an N-terminal L-alpha-aminoacyl-[protein] = an N-terminal L-phenylalanyl-L-alpha-aminoacyl-[protein] + tRNA(Phe). Functionally, functions in the N-end rule pathway of protein degradation where it conjugates Leu, Phe and, less efficiently, Met from aminoacyl-tRNAs to the N-termini of proteins containing an N-terminal arginine or lysine. This is Leucyl/phenylalanyl-tRNA--protein transferase from Brucella anthropi (strain ATCC 49188 / DSM 6882 / CCUG 24695 / JCM 21032 / LMG 3331 / NBRC 15819 / NCTC 12168 / Alc 37) (Ochrobactrum anthropi).